Reading from the N-terminus, the 384-residue chain is Decapping nuclease RAI1 (384 aa).

Position 168 (E168) interacts with a divalent metal cation. E217 is a substrate binding site. The a divalent metal cation site is built by D219, E237, and L238. Substrate-binding residues include K239 and Q263.

It belongs to the DXO/Dom3Z family. In terms of assembly, interacts with RAT1; the interaction is direct, stabilizes RAT1 protein structure and stimulates its exoribonuclease activity. The interaction also stimulates RAI1 pyrophosphohydrolase activity, probably by recruiting it to mRNA substrates. A divalent metal cation serves as cofactor.

The protein resides in the nucleus. It carries out the reaction a 5'-end NAD(+)-phospho-ribonucleoside in mRNA + H2O = a 5'-end phospho-ribonucleoside in mRNA + NAD(+) + H(+). The catalysed reaction is a 5'-end (N(7)-methyl 5'-triphosphoguanosine)-ribonucleoside-ribonucleotide in mRNA + H2O = a (N(7)-methyl 5'-triphosphoguanosine)-nucleoside + a 5'-end phospho-ribonucleoside in mRNA + H(+). It catalyses the reaction a 5'-end triphospho-ribonucleoside in mRNA + H2O = a 5'-end phospho-ribonucleoside in mRNA + diphosphate + H(+). Its function is as follows. Decapping enzyme for NAD-capped RNAs: specifically hydrolyzes the nicotinamide adenine dinucleotide (NAD) cap from a subset of RNAs by removing the entire NAD moiety from the 5'-end of an NAD-capped RNA. The NAD-cap is present at the 5'-end of some RNAs and snoRNAs. In contrast to the canonical 5'-end N7 methylguanosine (m7G) cap, the NAD cap promotes mRNA decay. Also acts as a non-canonical decapping enzyme that removes the entire cap structure of m7G capped or incompletely capped RNAs. Has decapping activity toward incomplete 5'-end m7G cap mRNAs such as unmethylated 5'-end-capped RNA (cap0), while it has no activity toward 2'-O-ribose methylated m7G cap (cap1). Also possesses RNA 5'-pyrophosphohydrolase activity by hydrolyzing the 5'-end triphosphate to release pyrophosphates. Stimulates exoribonuclease activity of Rat1, allowing it to degrade RNAs with stable secondary structure more effectively. The chain is Decapping nuclease RAI1 (RAI1) from Kluyveromyces lactis (strain ATCC 8585 / CBS 2359 / DSM 70799 / NBRC 1267 / NRRL Y-1140 / WM37) (Yeast).